A 632-amino-acid chain; its full sequence is 1,4-alpha-glucan branching enzyme GlgB (632 aa).

Catalysis depends on Asp310, which acts as the Nucleophile. The active-site Proton donor is Glu363.

This sequence belongs to the glycosyl hydrolase 13 family. GlgB subfamily. Monomer.

The catalysed reaction is Transfers a segment of a (1-&gt;4)-alpha-D-glucan chain to a primary hydroxy group in a similar glucan chain.. It functions in the pathway glycan biosynthesis; glycogen biosynthesis. Its function is as follows. Catalyzes the formation of the alpha-1,6-glucosidic linkages in glycogen by scission of a 1,4-alpha-linked oligosaccharide from growing alpha-1,4-glucan chains and the subsequent attachment of the oligosaccharide to the alpha-1,6 position. The chain is 1,4-alpha-glucan branching enzyme GlgB from Desulfitobacterium hafniense (strain Y51).